The primary structure comprises 207 residues: MTSRKKVLLKVIILGDSGVGKTSLMNQYVNKKFSNQYKATIGADFLTKEVMVDDRLVTMQIWDTAGQERFQSLGVAFYRGADCCVLVFDVTAPNTFKTLDSWRDEFLIQASPRDPENFPFVVLGNKIDLENRQVATKRAQAWCYSKNNIPYFETSAKEAINVEQAFQTIARNALKQETEVELYNEFPKPIKLDKNDRAKASAESCSC.

Threonine 2 bears the N-acetylthreonine mark. Serine 17, glycine 18, valine 19, glycine 20, lysine 21, threonine 22, serine 23, serine 34, asparagine 35, tyrosine 37, and threonine 40 together coordinate GTP. A Mg(2+)-binding site is contributed by threonine 22. The short motif at 28–41 (YVNKKFSNQYKATI) is the Switch 1 element. The Mg(2+) site is built by threonine 40 and aspartate 63. Residue glycine 66 coordinates GTP. Residues 67–82 (QERFQSLGVAFYRGAD) carry the Switch 2 motif. Phosphoserine is present on serine 72. Positions 125, 126, 128, 156, and 157 each coordinate GTP. Glycyl lysine isopeptide (Lys-Gly) (interchain with G-Cter in ubiquitin) cross-links involve residues lysine 191 and lysine 194. S-geranylgeranyl cysteine attachment occurs at residues cysteine 205 and cysteine 207. Cysteine 207 bears the Cysteine methyl ester mark.

Belongs to the small GTPase superfamily. Rab family. Interacts with NTRK1/TRKA. Interacts with RILP. Interacts with PSMA7. Interacts with RNF115. Interacts with FYCO1. Interacts with the PIK3C3/VPS34-PIK3R4 complex. The GTP-bound form interacts with OSBPL1A. The GTP-bound form interacts with RAC1. Interacts with CLN3. Interacts with CHM, the substrate-binding subunit of the Rab geranylgeranyltransferase complex. Interacts with C9orf72. Does not interact with HPS4 and the BLOC-3 complex (heterodimer of HPS1 and HPS4). Interacts with CLN5. Interacts with PLEKHM1 (via N- and C-terminus). Interacts with PRPH; the interaction is direct. Interacts with VPS13A. The GDP-bound form interacts with RIMOC1. Interacts with the MON1A-CCZ1B complex and this interaction is enhanced in the presence of RIMOC1. Interacts with VPS39 and VPS41. Forms a ternary complex with LAMP2 and RUFY4; the interaction with LAMP2 is mediated by RUFY4 (via RUN and coiled coil domains). Requires Mg(2+) as cofactor. Deubiquitination at Lys-191 and Lys-194 by USP32. In terms of processing, phosphorylated at Ser-72 by LRRK1; phosphorylation is dependent on protein kinase C (PKC) activation of LRRK1. Post-translationally, prenylated. Prenylation is required for association with cellular membranes.

It is found in the cytoplasmic vesicle. The protein localises to the phagosome membrane. Its subcellular location is the late endosome membrane. The protein resides in the lysosome membrane. It localises to the melanosome membrane. It is found in the autophagosome membrane. The protein localises to the lipid droplet. Its subcellular location is the endosome membrane. The protein resides in the mitochondrion membrane. It carries out the reaction GTP + H2O = GDP + phosphate + H(+). Regulated by guanine nucleotide exchange factors (GEFs) which promote the exchange of bound GDP for free GTP. Regulated by GTPase activating proteins (GAPs) which increase the GTP hydrolysis activity. Inhibited by GDP dissociation inhibitors (GDIs). In terms of biological role, the small GTPases Rab are key regulators of intracellular membrane trafficking, from the formation of transport vesicles to their fusion with membranes. Rabs cycle between an inactive GDP-bound form and an active GTP-bound form that is able to recruit to membranes different sets of downstream effectors directly responsible for vesicle formation, movement, tethering and fusion. In its active state, RAB7A binds to a variety of effector proteins playing a key role in the regulation of endo-lysosomal trafficking. Governs early-to-late endosomal maturation, microtubule minus-end as well as plus-end directed endosomal migration and positioning, and endosome-lysosome transport through different protein-protein interaction cascades. Also plays a central role in growth-factor-mediated cell signaling, nutrient-transporter-mediated nutrient uptake, neurotrophin transport in the axons of neurons and lipid metabolism. Also involved in regulation of some specialized endosomal membrane trafficking, such as maturation of melanosomes, pathogen-induced phagosomes (or vacuoles) and autophagosomes. Plays a role in the maturation and acidification of phagosomes that engulf pathogens, such as S.aureus and Mycobacteria. Plays a role in the fusion of phagosomes with lysosomes. In concert with RAC1, plays a role in regulating the formation of RBs (ruffled borders) in osteoclasts. Controls the endosomal trafficking and neurite outgrowth signaling of NTRK1/TRKA. Regulates the endocytic trafficking of the EGF-EGFR complex by regulating its lysosomal degradation. Involved in the ADRB2-stimulated lipolysis through lipophagy, a cytosolic lipase-independent autophagic pathway. Required for the exosomal release of SDCBP, CD63 and syndecan. Required for vesicular trafficking and cell surface expression of ACE2. May play a role in PRPH neuronal intermediate filament assembly. The sequence is that of Ras-related protein Rab-7a (RAB7A) from Pongo abelii (Sumatran orangutan).